We begin with the raw amino-acid sequence, 404 residues long: CCA-adding enzyme (404 aa).

The ATP site is built by glycine 27 and arginine 30. CTP-binding residues include glycine 27 and arginine 30. Mg(2+) contacts are provided by aspartate 40 and aspartate 42. Residues arginine 111, aspartate 154, arginine 157, arginine 160, and arginine 163 each coordinate ATP. Residues arginine 111, aspartate 154, arginine 157, arginine 160, and arginine 163 each coordinate CTP.

Belongs to the tRNA nucleotidyltransferase/poly(A) polymerase family. Bacterial CCA-adding enzyme type 3 subfamily. Homodimer. The cofactor is Mg(2+).

It carries out the reaction a tRNA precursor + 2 CTP + ATP = a tRNA with a 3' CCA end + 3 diphosphate. It catalyses the reaction a tRNA with a 3' CCA end + 2 CTP + ATP = a tRNA with a 3' CCACCA end + 3 diphosphate. In terms of biological role, catalyzes the addition and repair of the essential 3'-terminal CCA sequence in tRNAs without using a nucleic acid template. Adds these three nucleotides in the order of C, C, and A to the tRNA nucleotide-73, using CTP and ATP as substrates and producing inorganic pyrophosphate. tRNA 3'-terminal CCA addition is required both for tRNA processing and repair. Also involved in tRNA surveillance by mediating tandem CCA addition to generate a CCACCA at the 3' terminus of unstable tRNAs. While stable tRNAs receive only 3'-terminal CCA, unstable tRNAs are marked with CCACCA and rapidly degraded. The chain is CCA-adding enzyme from Geobacillus kaustophilus (strain HTA426).